Reading from the N-terminus, the 496-residue chain is Lysine--tRNA ligase (496 aa).

Glu-408 and Glu-415 together coordinate Mg(2+).

Belongs to the class-II aminoacyl-tRNA synthetase family. In terms of assembly, homodimer. It depends on Mg(2+) as a cofactor.

The protein resides in the cytoplasm. It carries out the reaction tRNA(Lys) + L-lysine + ATP = L-lysyl-tRNA(Lys) + AMP + diphosphate. In Legionella pneumophila (strain Lens), this protein is Lysine--tRNA ligase.